A 239-amino-acid chain; its full sequence is Skn-1 dependent zygotic transcript 1 protein (239 aa).

As to expression, expressed in mesendodermal precursor cells of embryos.

May have a role in mesendoderm development during embryogenesis. This is Skn-1 dependent zygotic transcript 1 protein (sdz-1) from Caenorhabditis elegans.